Here is a 250-residue protein sequence, read N- to C-terminus: Flavin-dependent thymidylate synthase (250 aa).

The 227-residue stretch at 7–233 (LSVELIACSS…PTVFGDFQVE (227 aa)) folds into the ThyX domain. Residues 92-95 (ELVR), 103-107 (QLSQR), and arginine 172 each bind dUMP. Residues 95–97 (RHR) and glutamine 103 contribute to the FAD site. The ThyX motif motif lies at 95–105 (RHRHFSFSQLS). Residues 188-190 (NFR) and histidine 194 contribute to the FAD site. A dUMP-binding site is contributed by arginine 199. Arginine 199 serves as the catalytic Involved in ionization of N3 of dUMP, leading to its activation.

It belongs to the thymidylate synthase ThyX family. Homotetramer. The cofactor is FAD.

The enzyme catalyses dUMP + (6R)-5,10-methylene-5,6,7,8-tetrahydrofolate + NADPH + H(+) = dTMP + (6S)-5,6,7,8-tetrahydrofolate + NADP(+). Its pathway is pyrimidine metabolism; dTTP biosynthesis. Functionally, catalyzes the reductive methylation of 2'-deoxyuridine-5'-monophosphate (dUMP) to 2'-deoxythymidine-5'-monophosphate (dTMP) while utilizing 5,10-methylenetetrahydrofolate (mTHF) as the methyl donor, and NADPH and FADH(2) as the reductant. The polypeptide is Flavin-dependent thymidylate synthase (Corynebacterium efficiens (strain DSM 44549 / YS-314 / AJ 12310 / JCM 11189 / NBRC 100395)).